Here is a 1205-residue protein sequence, read N- to C-terminus: Nitric oxide synthase 3 (1205 aa).

Disordered stretches follow at residues 1–20 (MGNL…LGLG) and 26–73 (CGKQ…FPRV). Residues 33 to 47 (SPAPEPSWAPAPATP) are compositionally biased toward pro residues. 2 residues coordinate Zn(2+): cysteine 96 and cysteine 101. The tract at residues 100–489 (RCLGSLVLPR…PDPWKGSAAK (390 aa)) is interaction with NOSIP. Serine 104 lines the (6R)-L-erythro-5,6,7,8-tetrahydrobiopterin pocket. Position 116 is a phosphoserine (serine 116). Residue cysteine 186 participates in heme b binding. Residues glutamine 250, tryptophan 359, tyrosine 360, and glutamate 364 each contribute to the L-arginine site. Arginine 368 lines the (6R)-L-erythro-5,6,7,8-tetrahydrobiopterin pocket. Asparagine 369 is a binding site for L-arginine. 3 residues coordinate (6R)-L-erythro-5,6,7,8-tetrahydrobiopterin: alanine 449, tryptophan 450, and phenylalanine 463. Position 478 (tyrosine 478) interacts with heme b. Position 498 is a phosphothreonine (threonine 498). Residues serine 529, glutamate 530, threonine 531, arginine 533, serine 575, and threonine 576 each contribute to the FMN site. Phosphoserine is present on residues serine 618, serine 636, and serine 641. Positions 657, 664, 690, and 694 each coordinate FMN. Arginine 781 contacts NADP(+). The disordered stretch occupies residues 796-850 (LQYQPGDHISPHPPPRSSHRPGQGGPRVAPFSERPLMPRTPPPGGPPPSWVRDPR). Histidine 803 contacts FAD. Residues 833–844 (PRTPPPGGPPPS) are compositionally biased toward pro residues. Positions 939, 941, 942, 957, and 959 each coordinate FAD. NADP(+) contacts are provided by threonine 1018, arginine 1051, serine 1080, arginine 1081, lysine 1087, tyrosine 1089, and glutamine 1091. Phosphothreonine is present on threonine 1177. Phosphoserine occurs at positions 1179 and 1181.

The protein belongs to the NOS family. Homodimer. Interacts with NOSIP and NOSTRIN. Interacts with HSP90AB1. Forms a complex with ASL, ASS1 and SLC7A1; the complex regulates cell-autonomous L-arginine synthesis and citrulline recycling while channeling extracellular L-arginine to nitric oxide synthesis pathway. It depends on heme b as a cofactor. Requires FAD as cofactor. FMN is required as a cofactor. The cofactor is (6R)-L-erythro-5,6,7,8-tetrahydrobiopterin.

It is found in the membrane. It localises to the caveola. Its subcellular location is the cytoplasm. The protein resides in the cytoskeleton. The protein localises to the golgi apparatus. It is found in the cell membrane. It carries out the reaction 2 L-arginine + 3 NADPH + 4 O2 + H(+) = 2 L-citrulline + 2 nitric oxide + 3 NADP(+) + 4 H2O. Stimulated by calcium/calmodulin. Inhibited by NOSIP and NOSTRIN. In terms of biological role, produces nitric oxide (NO) which is implicated in vascular smooth muscle relaxation through a cGMP-mediated signal transduction pathway. NO mediates vascular endothelial growth factor (VEGF)-induced angiogenesis in coronary vessels and promotes blood clotting through the activation of platelets. The chain is Nitric oxide synthase 3 (NOS3) from Ovis aries (Sheep).